Here is an 84-residue protein sequence, read N- to C-terminus: Small ribosomal subunit protein uS17 (84 aa).

The protein belongs to the universal ribosomal protein uS17 family. In terms of assembly, part of the 30S ribosomal subunit.

Its function is as follows. One of the primary rRNA binding proteins, it binds specifically to the 5'-end of 16S ribosomal RNA. The polypeptide is Small ribosomal subunit protein uS17 (Vibrio atlanticus (strain LGP32) (Vibrio splendidus (strain Mel32))).